The primary structure comprises 115 residues: MARVKNGIVHVARRKKILKKTKGFWGTKKSNYKKAKDTLRKGMMYATRDRKTRKRDFRSLWIVRISAALTGMGINYSKFFESLKKSNIKLNRKILSNLAIEDIETFKKIVYEIKN.

Belongs to the bacterial ribosomal protein bL20 family.

Functionally, binds directly to 23S ribosomal RNA and is necessary for the in vitro assembly process of the 50S ribosomal subunit. It is not involved in the protein synthesizing functions of that subunit. This Borrelia turicatae (strain 91E135) protein is Large ribosomal subunit protein bL20.